Here is a 123-residue protein sequence, read N- to C-terminus: Small ribosomal subunit protein uS12c (123 aa).

Belongs to the universal ribosomal protein uS12 family. As to quaternary structure, part of the 30S ribosomal subunit.

It localises to the plastid. The protein localises to the chloroplast. With S4 and S5 plays an important role in translational accuracy. Located at the interface of the 30S and 50S subunits. In Pinus thunbergii (Japanese black pine), this protein is Small ribosomal subunit protein uS12c (rps12).